The primary structure comprises 329 residues: Porphobilinogen deaminase (329 aa).

Cysteine 253 carries the S-(dipyrrolylmethanemethyl)cysteine modification.

Belongs to the HMBS family. Monomer. It depends on dipyrromethane as a cofactor.

The catalysed reaction is 4 porphobilinogen + H2O = hydroxymethylbilane + 4 NH4(+). In terms of biological role, tetrapolymerization of the monopyrrole PBG into the hydroxymethylbilane pre-uroporphyrinogen in several discrete steps. The sequence is that of Porphobilinogen deaminase from Leifsonia xyli subsp. xyli (strain CTCB07).